We begin with the raw amino-acid sequence, 219 residues long: Glutamine transport system permease protein GlnP (219 aa).

Residues 1–22 (MQFDWSAIWPAIPLLIEGAKMT) are Periplasmic-facing. One can recognise an ABC transmembrane type-1 domain in the interval 19-209 (AKMTLWISVL…IITLVLSFIL (191 aa)). A helical transmembrane segment spans residues 23 to 43 (LWISVLGLAGGLVIGLLAGFA). Topologically, residues 44–53 (RTFGGWIANH) are cytoplasmic. Residues 54 to 74 (VALVFIEVIRGTPIVVQVMFI) traverse the membrane as a helical segment. The Periplasmic portion of the chain corresponds to 75-88 (YFALPMAFNDLRID). A helical transmembrane segment spans residues 89–109 (PFTAAVVTIMINSGAYIAEIT). Residues 110–150 (RGAVLSIHKGFREAGLALGLSRWETIRYVILPLALRRMLPP) are Cytoplasmic-facing. The chain crosses the membrane as a helical span at residues 151-171 (LGNQWIISIKDTSLFIVIGVA). The Periplasmic portion of the chain corresponds to 172 to 187 (ELTRQGQEIIAGNFRA). Residues 188–208 (LEIWSAVAVFYLIITLVLSFI) traverse the membrane as a helical segment. Over 209–219 (LRRLERRMKIL) the chain is Cytoplasmic.

It belongs to the binding-protein-dependent transport system permease family. HisMQ subfamily.

It localises to the cell inner membrane. Functionally, part of the binding-protein-dependent transport system for glutamine; probably responsible for the translocation of the substrate across the membrane. This is Glutamine transport system permease protein GlnP (glnP) from Escherichia coli O6:H1 (strain CFT073 / ATCC 700928 / UPEC).